We begin with the raw amino-acid sequence, 351 residues long: Holliday junction branch migration complex subunit RuvB (351 aa).

Residues Met-1–Tyr-186 are large ATPase domain (RuvB-L). Residues Ile-25, Arg-26, Gly-67, Lys-70, Thr-71, Thr-72, Glu-133–Phe-135, Arg-176, Tyr-186, and Arg-223 contribute to the ATP site. Thr-71 contacts Mg(2+). The small ATPAse domain (RuvB-S) stretch occupies residues Arg-187–Asn-257. The interval Ile-260–Glu-351 is head domain (RuvB-H). Positions 296, 315, and 320 each coordinate DNA.

The protein belongs to the RuvB family. In terms of assembly, homohexamer. Forms an RuvA(8)-RuvB(12)-Holliday junction (HJ) complex. HJ DNA is sandwiched between 2 RuvA tetramers; dsDNA enters through RuvA and exits via RuvB. An RuvB hexamer assembles on each DNA strand where it exits the tetramer. Each RuvB hexamer is contacted by two RuvA subunits (via domain III) on 2 adjacent RuvB subunits; this complex drives branch migration. In the full resolvosome a probable DNA-RuvA(4)-RuvB(12)-RuvC(2) complex forms which resolves the HJ.

The protein resides in the cytoplasm. The catalysed reaction is ATP + H2O = ADP + phosphate + H(+). In terms of biological role, the RuvA-RuvB-RuvC complex processes Holliday junction (HJ) DNA during genetic recombination and DNA repair, while the RuvA-RuvB complex plays an important role in the rescue of blocked DNA replication forks via replication fork reversal (RFR). RuvA specifically binds to HJ cruciform DNA, conferring on it an open structure. The RuvB hexamer acts as an ATP-dependent pump, pulling dsDNA into and through the RuvAB complex. RuvB forms 2 homohexamers on either side of HJ DNA bound by 1 or 2 RuvA tetramers; 4 subunits per hexamer contact DNA at a time. Coordinated motions by a converter formed by DNA-disengaged RuvB subunits stimulates ATP hydrolysis and nucleotide exchange. Immobilization of the converter enables RuvB to convert the ATP-contained energy into a lever motion, pulling 2 nucleotides of DNA out of the RuvA tetramer per ATP hydrolyzed, thus driving DNA branch migration. The RuvB motors rotate together with the DNA substrate, which together with the progressing nucleotide cycle form the mechanistic basis for DNA recombination by continuous HJ branch migration. Branch migration allows RuvC to scan DNA until it finds its consensus sequence, where it cleaves and resolves cruciform DNA. This chain is Holliday junction branch migration complex subunit RuvB, found in Coxiella burnetii (strain CbuG_Q212) (Coxiella burnetii (strain Q212)).